We begin with the raw amino-acid sequence, 205 residues long: Ribosomal RNA large subunit methyltransferase E (205 aa).

S-adenosyl-L-methionine is bound by residues glycine 50, tryptophan 52, aspartate 67, asparagine 83, and aspartate 111. The active-site Proton acceptor is the lysine 151.

Belongs to the class I-like SAM-binding methyltransferase superfamily. RNA methyltransferase RlmE family.

Its subcellular location is the cytoplasm. It carries out the reaction uridine(2552) in 23S rRNA + S-adenosyl-L-methionine = 2'-O-methyluridine(2552) in 23S rRNA + S-adenosyl-L-homocysteine + H(+). Its function is as follows. Specifically methylates the uridine in position 2552 of 23S rRNA at the 2'-O position of the ribose in the fully assembled 50S ribosomal subunit. This Thermoplasma acidophilum (strain ATCC 25905 / DSM 1728 / JCM 9062 / NBRC 15155 / AMRC-C165) protein is Ribosomal RNA large subunit methyltransferase E.